The chain runs to 132 residues: Mediator of RNA polymerase II transcription subunit 11 (132 aa).

It belongs to the Mediator complex subunit 11 family. In terms of assembly, component of the Mediator complex.

Its subcellular location is the nucleus. In terms of biological role, component of the Mediator complex, a coactivator involved in the regulated transcription of nearly all RNA polymerase II-dependent genes. Mediator functions as a bridge to convey information from gene-specific regulatory proteins to the basal RNA polymerase II transcription machinery. Mediator is recruited to promoters by direct interactions with regulatory proteins and serves as a scaffold for theQ9P086 assembly of a functional pre-initiation complex with RNA polymerase II and the general transcription factors. This Aedes aegypti (Yellowfever mosquito) protein is Mediator of RNA polymerase II transcription subunit 11 (MED11).